The following is a 104-amino-acid chain: Small ribosomal subunit protein bS6c (104 aa).

Belongs to the bacterial ribosomal protein bS6 family.

The protein localises to the plastid. It is found in the cyanelle. Its function is as follows. Binds together with bS18 to 16S ribosomal RNA. This chain is Small ribosomal subunit protein bS6c (rps6), found in Cyanophora paradoxa.